Consider the following 217-residue polypeptide: 3,4-dihydroxy-2-butanone 4-phosphate synthase (217 aa).

D-ribulose 5-phosphate is bound by residues 37–38 (RE), D42, 150–154 (RGGHT), and E174. E38 lines the Mg(2+) pocket. H153 serves as a coordination point for Mg(2+).

The protein belongs to the DHBP synthase family. As to quaternary structure, homodimer. Requires Mg(2+) as cofactor. The cofactor is Mn(2+).

It catalyses the reaction D-ribulose 5-phosphate = (2S)-2-hydroxy-3-oxobutyl phosphate + formate + H(+). The protein operates within cofactor biosynthesis; riboflavin biosynthesis; 2-hydroxy-3-oxobutyl phosphate from D-ribulose 5-phosphate: step 1/1. In terms of biological role, catalyzes the conversion of D-ribulose 5-phosphate to formate and 3,4-dihydroxy-2-butanone 4-phosphate. The polypeptide is 3,4-dihydroxy-2-butanone 4-phosphate synthase (Klebsiella pneumoniae (strain 342)).